A 147-amino-acid chain; its full sequence is uncharacterized protein (147 aa).

This sequence belongs to the limonene-1,2-epoxide hydrolase family.

This is an uncharacterized protein from Bacillus subtilis (strain 168).